The chain runs to 588 residues: MAAHDDDINRGTRPARGSEDPAGQVAYLEQEIAVLRRKLADSPRHTRILEERIVELQTNLAGVSAQNERLANTLREARDQIVALKEEVDRLAQPPAGFGVFLQANEDGTCDIFTGGRKLRVNVSPSVELDDLRRGQEVMLNEALNVVEAMQFERAGDIVTLKEILEDGERALVVGHTDEERVVRLAEPLLDITIRSGDALLLDSRSGYVYEVVPKSEVEELVLEEVPDIDYDKIGGLGDQIELIRDAVELPYLHPDLFKEHELRPPKGILLYGPPGCGKTLIAKAVANSLAKKVAEVTGQPAGKSYFLNIKGPELLNKYVGETERHIRLVFQRAREKASEGTPVIVFFDEMESLFRTRGSGVSSDVENTIVPQLLAEIDGVEGLENVIVIGASNREDMIDPAILRPGRLDVKIKIERPDAEAAKDIFAKYLTPGLPLHADDLSEHTGSREAAAHAMIQSVVERMYTESEENRFLEVTYANGDKEVLYFKDFNSGAMIQNIVDRAKKMAIKAFLEQGQKGLRVAHLLQACVDEFKENEDLPNTTNPDDWARISGKKGERIVFIRTLVTGKQGADTGRSIDTVANTGQYL.

Residues 1 to 10 are compositionally biased toward basic and acidic residues; the sequence is MAAHDDDINR. Residues 1-22 form a disordered region; sequence MAAHDDDINRGTRPARGSEDPA. A coiled-coil region spans residues 47–94; the sequence is RILEERIVELQTNLAGVSAQNERLANTLREARDQIVALKEEVDRLAQP. ATP is bound at residue 276 to 281; sequence GCGKTL. The segment at 587-588 is docks into pockets in the proteasome alpha-ring; that stretch reads YL.

The protein belongs to the AAA ATPase family. As to quaternary structure, homohexamer. Assembles into a hexameric ring structure that caps the 20S proteasome core. Strongly interacts with the prokaryotic ubiquitin-like protein Pup through a hydrophobic interface; the interacting region of ARC lies in its N-terminal coiled-coil domain. There is one Pup binding site per ARC hexamer ring. Upon ATP-binding, the C-terminus of ARC interacts with the alpha-rings of the proteasome core, possibly by binding to the intersubunit pockets.

It functions in the pathway protein degradation; proteasomal Pup-dependent pathway. Its function is as follows. ATPase which is responsible for recognizing, binding, unfolding and translocation of pupylated proteins into the bacterial 20S proteasome core particle. May be essential for opening the gate of the 20S proteasome via an interaction with its C-terminus, thereby allowing substrate entry and access to the site of proteolysis. Thus, the C-termini of the proteasomal ATPase may function like a 'key in a lock' to induce gate opening and therefore regulate proteolysis. The polypeptide is Proteasome-associated ATPase (Streptomyces griseus subsp. griseus (strain JCM 4626 / CBS 651.72 / NBRC 13350 / KCC S-0626 / ISP 5235)).